The primary structure comprises 263 residues: Ribosomal RNA small subunit methyltransferase A (263 aa).

Asparagine 20, leucine 22, glycine 47, glutamate 68, aspartate 90, and asparagine 111 together coordinate S-adenosyl-L-methionine.

The protein belongs to the class I-like SAM-binding methyltransferase superfamily. rRNA adenine N(6)-methyltransferase family. RsmA subfamily.

It is found in the cytoplasm. The enzyme catalyses adenosine(1518)/adenosine(1519) in 16S rRNA + 4 S-adenosyl-L-methionine = N(6)-dimethyladenosine(1518)/N(6)-dimethyladenosine(1519) in 16S rRNA + 4 S-adenosyl-L-homocysteine + 4 H(+). Specifically dimethylates two adjacent adenosines (A1518 and A1519) in the loop of a conserved hairpin near the 3'-end of 16S rRNA in the 30S particle. May play a critical role in biogenesis of 30S subunits. This Chlorobium chlorochromatii (strain CaD3) protein is Ribosomal RNA small subunit methyltransferase A.